The following is a 332-amino-acid chain: CRISPR-associated endonuclease Cas1 3 (332 aa).

Residues glutamate 159, histidine 224, and glutamate 239 each contribute to the Mn(2+) site.

This sequence belongs to the CRISPR-associated endonuclease Cas1 family. In terms of assembly, homodimer, forms a heterotetramer with a Cas2 homodimer. Mg(2+) serves as cofactor. It depends on Mn(2+) as a cofactor.

Its function is as follows. CRISPR (clustered regularly interspaced short palindromic repeat), is an adaptive immune system that provides protection against mobile genetic elements (viruses, transposable elements and conjugative plasmids). CRISPR clusters contain spacers, sequences complementary to antecedent mobile elements, and target invading nucleic acids. CRISPR clusters are transcribed and processed into CRISPR RNA (crRNA). Acts as a dsDNA endonuclease. Involved in the integration of spacer DNA into the CRISPR cassette. This Thermus thermophilus (strain ATCC 27634 / DSM 579 / HB8) protein is CRISPR-associated endonuclease Cas1 3.